We begin with the raw amino-acid sequence, 201 residues long: dITP/XTP pyrophosphatase (201 aa).

Substrate is bound at residue 8–13; it reads TTNENK. Residue aspartate 68 is the Proton acceptor of the active site. A Mg(2+)-binding site is contributed by aspartate 68. Substrate is bound by residues serine 69, 155–158, lysine 177, and 182–183; these read FGYD and HR.

Belongs to the HAM1 NTPase family. As to quaternary structure, homodimer. Mg(2+) is required as a cofactor.

The enzyme catalyses XTP + H2O = XMP + diphosphate + H(+). It carries out the reaction dITP + H2O = dIMP + diphosphate + H(+). It catalyses the reaction ITP + H2O = IMP + diphosphate + H(+). Its function is as follows. Pyrophosphatase that catalyzes the hydrolysis of nucleoside triphosphates to their monophosphate derivatives, with a high preference for the non-canonical purine nucleotides XTP (xanthosine triphosphate), dITP (deoxyinosine triphosphate) and ITP. Seems to function as a house-cleaning enzyme that removes non-canonical purine nucleotides from the nucleotide pool, thus preventing their incorporation into DNA/RNA and avoiding chromosomal lesions. In Borrelia garinii subsp. bavariensis (strain ATCC BAA-2496 / DSM 23469 / PBi) (Borreliella bavariensis), this protein is dITP/XTP pyrophosphatase.